The following is a 140-amino-acid chain: Nucleoside diphosphate kinase (140 aa).

Residues Lys11, Phe59, Arg87, Thr93, Arg104, and Asn114 each contribute to the ATP site. Catalysis depends on His117, which acts as the Pros-phosphohistidine intermediate.

It belongs to the NDK family. In terms of assembly, homotetramer. Requires Mg(2+) as cofactor.

The protein resides in the cytoplasm. The catalysed reaction is a 2'-deoxyribonucleoside 5'-diphosphate + ATP = a 2'-deoxyribonucleoside 5'-triphosphate + ADP. The enzyme catalyses a ribonucleoside 5'-diphosphate + ATP = a ribonucleoside 5'-triphosphate + ADP. Major role in the synthesis of nucleoside triphosphates other than ATP. The ATP gamma phosphate is transferred to the NDP beta phosphate via a ping-pong mechanism, using a phosphorylated active-site intermediate. In Nitrobacter hamburgensis (strain DSM 10229 / NCIMB 13809 / X14), this protein is Nucleoside diphosphate kinase.